The primary structure comprises 342 residues: tRNA N6-adenosine threonylcarbamoyltransferase (342 aa).

Fe cation-binding residues include histidine 111 and histidine 115. Residues 134-138 (LVSGG), aspartate 167, glycine 180, aspartate 184, and asparagine 273 each bind substrate. Aspartate 298 contacts Fe cation.

The protein belongs to the KAE1 / TsaD family. It depends on Fe(2+) as a cofactor.

It is found in the cytoplasm. The catalysed reaction is L-threonylcarbamoyladenylate + adenosine(37) in tRNA = N(6)-L-threonylcarbamoyladenosine(37) in tRNA + AMP + H(+). Functionally, required for the formation of a threonylcarbamoyl group on adenosine at position 37 (t(6)A37) in tRNAs that read codons beginning with adenine. Is involved in the transfer of the threonylcarbamoyl moiety of threonylcarbamoyl-AMP (TC-AMP) to the N6 group of A37, together with TsaE and TsaB. TsaD likely plays a direct catalytic role in this reaction. The chain is tRNA N6-adenosine threonylcarbamoyltransferase from Gloeobacter violaceus (strain ATCC 29082 / PCC 7421).